Reading from the N-terminus, the 224-residue chain is Large ribosomal subunit protein uL1 (224 aa).

It belongs to the universal ribosomal protein uL1 family. As to quaternary structure, part of the 50S ribosomal subunit.

Its function is as follows. Binds directly to 23S rRNA. The L1 stalk is quite mobile in the ribosome, and is involved in E site tRNA release. Protein L1 is also a translational repressor protein, it controls the translation of the L11 operon by binding to its mRNA. This Borrelia duttonii (strain Ly) protein is Large ribosomal subunit protein uL1.